Reading from the N-terminus, the 1347-residue chain is MENLPFPLKLLSASSLNAPSSTPWVLDIFLTLVFALGFFFLLLPYLSYFRCDDPPSPSPGKRKCPVGRRRRPRGRMKNHSLRAGRECPRGLQETSDLLSQLQSLLGPHLDKGDFGQLSGPDPPGEVGERAPDGASQSSHEPMEDAAPILSPLASPDPQAKHPQDLASTPSPGPMTTSVSSLSASQPPEPSLPLEHPSPEPPALFPHPPHTPDPLACSPPPPKGFTAPPLRDSTLITPSHCDSVALPLGTVPQSLSPHEDLVASVPAISGLGGSNSHVSASSRWQETARTSCAFNSSVQQDHLSRHPPETYQMEAGSLFLLSSDGQNAVGIQVTETAKVNIWEEKENVGSFTDRMTPEKHLNSLRNLAKSLDAEQDTTNPKPFWNMGENSKQLPGPQKLSDPRLWQESFWKNYSQLFWGLPSLHSESLVANAWVTDRSYTLQSPPFLFNEMSNVCPIQRETTMSPLLFQAQPPSHLGPECQPFISSTPQFRPTPMAQAEAQAHLQSSFPVLSPAFPSLIKNTGVACPASQNKVQALSLPETQHPEWPLLRRQLEGRLALPSRVQKSQDVFSVSTPNLPQESLTSILPENFPVSPELRRQLEQHIKKWIIQHWGNLGRIQESLDLMQLRDESPGTSQAKGKPSPWQSSMSTGESSKEAQKVKFQLERDPCPHLGQILGETPQNLSRDMKSFPRKVLGVTSEESERNLRKPLRSDSGSDLLRCTERTHIENILKAHMGRNLGQTNEGLIPVRVRRSWLAVNQALPVSNTHVKTSNLAAPKSGKACVNTAQVLSFLEPCTQQGLGAHIVRFWAKHRWGLPLRVLKPIQCFKLEKVSSLSLTQLAGPSSATCESGAGSEVEVDMFLRKPPMASLRKQVLTKASDHMPESLLASSPAWKQFQRAPRGIPSWNDHGPLKPPPAGQEGRWPSKPLTYSLTGSTQQSRSLGAQSSKAGETREAVPQCRVPLETCMLANLQATSEDMHGFEAPGTSKSSLHPRVSVSQDPRKLCLMEEVVNEFEPGMATKSETQPQVCAAVVLLPDGQASVVPHASENLVSQVPQGHLQSMPAGNMRASQELHDLMAARRSKLVHEEPRNPNCQGSCKNQRPMFPPIHKSEKSRKPNLEKHEERLEGLRTPQLTPVRKTEDTHQDEGVQLLPSKKQPPSVSHFGGNIKQFFQWIFSKKKSKPAPVTAESQKTVKNRSCVYSSSAEAQGLMTAVGQMLDEKMSLCHARHASKVNQHKQKFQAPVCGFPCNHRHLFYSEHGRILSYAASSQQATLKSQGCPNRDRQIRNQQPLKSVRCNNEQWGLRHPQILHPKKAVSPVSPLQHWPKTSGASSHHHHCPRHCLLWEGI.

The helical transmembrane segment at 23–43 (PWVLDIFLTLVFALGFFFLLL) threads the bilayer. Disordered stretches follow at residues 55-89 (PSPS…ECPR), 106-235 (GPHL…STLI), 373-397 (EQDT…GPQK), 628-658 (DESP…EAQK), 899-955 (PRGI…REAV), and 1085-1160 (HEEP…PPSV). A compositionally biased stretch (basic residues) spans 60–82 (GKRKCPVGRRRRPRGRMKNHSLR). A compositionally biased stretch (polar residues) spans 165-178 (LASTPSPGPMTTSV). Over residues 198-222 (PEPPALFPHPPHTPDPLACSPPPPK) the composition is skewed to pro residues. Composition is skewed to polar residues over residues 631–651 (PGTS…STGE) and 927–948 (LTYS…SSKA). Basic and acidic residues-rich tracts occupy residues 1108-1127 (HKSE…RLEG) and 1137-1146 (RKTEDTHQDE).

This sequence belongs to the SPATA31 family.

It is found in the membrane. May play a role in spermatogenesis. This Homo sapiens (Human) protein is Spermatogenesis-associated protein 31A1.